Reading from the N-terminus, the 613-residue chain is V-type proton ATPase catalytic subunit A isoform 1 (613 aa).

240–247 is a binding site for ATP; it reads GAFGCGKT.

This sequence belongs to the ATPase alpha/beta chains family. V-ATPase is a heteromultimeric enzyme composed of a peripheral catalytic V1 complex (main components: subunits A, B, C, D, E, and F) attached to an integral membrane V0 proton pore complex (main component: the proteolipid protein).

The catalysed reaction is ATP + H2O + 4 H(+)(in) = ADP + phosphate + 5 H(+)(out). In terms of biological role, catalytic subunit of the peripheral V1 complex of vacuolar ATPase. V-ATPase vacuolar ATPase is responsible for acidifying a variety of intracellular compartments in eukaryotic cells. This chain is V-type proton ATPase catalytic subunit A isoform 1, found in Acetabularia acetabulum (Mermaid's wine glass).